Here is a 41-residue protein sequence, read N- to C-terminus: Photosystem I reaction center subunit IX (41 aa).

The chain crosses the membrane as a helical span at residues 7-27 (YLSTAPVLATLWFGFLAGLLI).

It belongs to the PsaJ family.

The protein resides in the plastid. It localises to the chloroplast thylakoid membrane. In terms of biological role, may help in the organization of the PsaE and PsaF subunits. This chain is Photosystem I reaction center subunit IX, found in Physcomitrium patens (Spreading-leaved earth moss).